A 349-amino-acid chain; its full sequence is Probable G-protein coupled receptor 21 (349 aa).

The Extracellular portion of the chain corresponds to 1–32 (MNSTLDGNQSSHPFCLLAFGYLETVNFCLLEV). N2 and N8 each carry an N-linked (GlcNAc...) asparagine glycan. A helical transmembrane segment spans residues 33–53 (LIIVFLTVLIISGNIIVIFVF). Topologically, residues 54 to 75 (HCAPLLNHHTTSYFIQTMAYAD) are cytoplasmic. A helical membrane pass occupies residues 76 to 96 (LFVGVSCVVPSLSLLHHPLPV). Over 97-104 (EESLTCQI) the chain is Extracellular. Residues 105–125 (FGFVVSVLKSVSMASLACISI) form a helical membrane-spanning segment. At 126–147 (DRYIAITKPLTYNTLVTPWRLR) the chain is on the cytoplasmic side. The helical transmembrane segment at 148–168 (LCIFLIWLYSTLVFLPSFFHW) threads the bilayer. Over 169-191 (GKPGYHGDVFQWCAESWHTDSYF) the chain is Extracellular. The chain crosses the membrane as a helical span at residues 192–212 (TLFIVMMLYAPAALIVCFTYF). The Cytoplasmic segment spans residues 213–252 (NIFRICQQHTKDISERQARFSSQSGETGEVQACPDKRYAM). Residues 253–273 (VLFRITSVFYILWLPYIIYFL) traverse the membrane as a helical segment. Topologically, residues 274 to 283 (LESSTGHSNR) are extracellular. The helical transmembrane segment at 284 to 304 (FASFLTTWLAISNSFCNCVIY) threads the bilayer. Over 305–349 (SLSNSVFQRGLKRLSGAMCTSCASQTTANDPYTVRSKGPLNGCHI) the chain is Cytoplasmic.

This sequence belongs to the G-protein coupled receptor 1 family. In terms of tissue distribution, not detected in the brain regions thalamus, putamen, caudate, frontal cortex, pons, hypothalamus, hippocampus.

The protein localises to the cell membrane. Orphan receptor. The chain is Probable G-protein coupled receptor 21 (GPR21) from Homo sapiens (Human).